Here is a 139-residue protein sequence, read N- to C-terminus: Holo-[acyl-carrier-protein] synthase (139 aa).

Residues D8 and E61 each coordinate Mg(2+).

Belongs to the P-Pant transferase superfamily. AcpS family. Requires Mg(2+) as cofactor.

The protein resides in the cytoplasm. It carries out the reaction apo-[ACP] + CoA = holo-[ACP] + adenosine 3',5'-bisphosphate + H(+). Its function is as follows. Transfers the 4'-phosphopantetheine moiety from coenzyme A to a Ser of acyl-carrier-protein. The protein is Holo-[acyl-carrier-protein] synthase of Nitrobacter winogradskyi (strain ATCC 25391 / DSM 10237 / CIP 104748 / NCIMB 11846 / Nb-255).